The following is a 329-amino-acid chain: Probable acyltransferase FabY (329 aa).

The 145-residue stretch at Tyr18 to Ala162 folds into the N-acetyltransferase domain.

Belongs to the acetyltransferase family. FabY subfamily.

Its pathway is lipid metabolism; fatty acid biosynthesis. Supports initiation of fatty acid biosynthesis in the absence of FabH. This is Probable acyltransferase FabY from Escherichia coli O157:H7.